The following is a 562-amino-acid chain: ATP-dependent RNA helicase dbp2 (562 aa).

A Q motif motif is present at residues 132–160 (ETFDEAGFPRYVMDEVKAQGFPAPTAIQS). A Helicase ATP-binding domain is found at 163–338 (WPMALSGRDV…ADFLTDFIQV (176 aa)). 176-183 (AETGSGKT) is an ATP binding site. The short motif at 286–289 (DEAD) is the DEAD box element. In terms of domain architecture, Helicase C-terminal spans 370–515 (HLEKIMEGRE…QIDPRLAEMA (146 aa)). An RNA-binding RGG-box region spans residues 526–548 (GGYRGRGGGGWRGGRGGGGGGGS). Residues 536–550 (WRGGRGGGGGGGSVG) are compositionally biased toward gly residues. Positions 536–562 (WRGGRGGGGGGGSVGGANALPLNNRRW) are disordered.

The protein belongs to the DEAD box helicase family. DDX5/DBP2 subfamily. In terms of assembly, associates with polysomes.

It is found in the cytoplasm. Its subcellular location is the nucleus. It catalyses the reaction ATP + H2O = ADP + phosphate + H(+). Its function is as follows. ATP-dependent RNA helicase involved nonsense-mediated mRNA decay and ribosome biogenesis through rRNA processing. The sequence is that of ATP-dependent RNA helicase dbp2 (drh-1) from Neurospora crassa (strain ATCC 24698 / 74-OR23-1A / CBS 708.71 / DSM 1257 / FGSC 987).